The chain runs to 1068 residues: Self-sufficient cytochrome P450 monooxygenase CYP505U2 (1068 aa).

Cysteine 408 serves as a coordination point for heme. A disordered region spans residues 464 to 498 (TTAGMVPESVQSLRQAQKSGKPGNSKSSANESMVG). Positions 472 to 498 (SVQSLRQAQKSGKPGNSKSSANESMVG) are enriched in polar residues. A Flavodoxin-like domain is found at 505–646 (VSIFYGSNSG…DLEKWEESIL (142 aa)). Residues 511–515 (SNSGS) and 590–622 (VFGC…QRVA) each bind FMN. An FAD-binding FR-type domain is found at 679-909 (KEFLEATVTS…RRSNPAFHPP (231 aa)).

It in the N-terminal section; belongs to the cytochrome P450 family. FAD serves as cofactor. It depends on FMN as a cofactor. The cofactor is heme.

The enzyme catalyses 2 oxidized [cytochrome P450] + NADPH = 2 reduced [cytochrome P450] + NADP(+) + H(+). It carries out the reaction an organic molecule + reduced [NADPH--hemoprotein reductase] + O2 = an alcohol + oxidized [NADPH--hemoprotein reductase] + H2O + H(+). It catalyses the reaction dodecanoate + reduced [NADPH--hemoprotein reductase] + O2 = 3-hydroxydodecanoate + oxidized [NADPH--hemoprotein reductase] + H2O + H(+). The catalysed reaction is dodecanoate + reduced [NADPH--hemoprotein reductase] + O2 = 7-hydroxydodecanoate + oxidized [NADPH--hemoprotein reductase] + H2O + H(+). The enzyme catalyses dodecan-1-ol + reduced [NADPH--hemoprotein reductase] + O2 = 1,4-dodecanediol + oxidized [NADPH--hemoprotein reductase] + H2O + H(+). It carries out the reaction dodecan-1-ol + reduced [NADPH--hemoprotein reductase] + O2 = 1,3-dodecanediol + oxidized [NADPH--hemoprotein reductase] + H2O + H(+). Its function is as follows. Self-sufficient cytochrome P450 monooxygenase that catalyzes the regioselective in-chain hydroxylation of alkanes, fatty alcohols, and fatty acids. Preferentially hydroxylates 1-dodecanol at C3 and C4 (positions omega-8 and omega-9). It is very likely that CYP505U2 prefers dodecanol, and probably other fatty alcohols, over fatty acids as substrates. Does not show any significant activity toward tetradecanoic acid. This Exserohilum turcicum (strain 28A) (Northern leaf blight fungus) protein is Self-sufficient cytochrome P450 monooxygenase CYP505U2.